An 854-amino-acid polypeptide reads, in one-letter code: Disrupted in schizophrenia 1 protein (854 aa).

Residues 1–18 (MPGGGPQGAPAAAGGGGV) are compositionally biased toward gly residues. Disordered regions lie at residues 1-24 (MPGG…RAGS), 179-205 (SAEL…SHSA), 221-257 (GERG…GPHE), and 278-323 (AQAA…SGDA). The tract at residues 1 to 292 (MPGGGPQGAP…NSSRPERDMH (292 aa)) is interaction with MAP1A. The Interaction with FBXW7 motif lies at 197–203 (PTPPGSH). Residues 285–295 (SRPERDMHSLP) are compositionally biased toward basic and acidic residues. Positions 293–696 (SLPDMDPGSS…LGKVWEADLE (404 aa)) are interaction with TRAF3IP1. The span at 296 to 309 (DMDPGSSSSLDPSL) shows a compositional bias: low complexity. Coiled coils occupy residues 366–394 (ENDD…HFQL), 452–505 (ITRR…CDLT), and 602–666 (WTAK…SVKE). Lysine 372 participates in a covalent cross-link: Glycyl lysine isopeptide (Lys-Gly) (interchain with G-Cter in ubiquitin). A required for localization to punctate cytoplasmic foci region spans residues 440 to 597 (LEPTAQDSLH…LLEAKMHAIS (158 aa)). A necessary and sufficient for interaction with PCNT and localization at the centrosome region spans residues 446–854 (DSLHVSITRR…MTAGVHEAQA (409 aa)). Residues 598 to 854 (GNHFWTAKDL…MTAGVHEAQA (257 aa)) form an interaction with ATF4 and ATF5 region. A disordered region spans residues 716–739 (VEDERQMDDLEGAAPPIPPRLHSE). Residues 727–854 (GAAPPIPPRL…MTAGVHEAQA (128 aa)) form an interaction with PAFAH1B1 region. The stretch at 802 to 830 (SHDEDLIQSLRRELQMVKETLQAMILQLQ) forms a coiled coil. Residues 802–835 (SHDEDLIQSLRRELQMVKETLQAMILQLQPAKEA) are interaction with NDEL1.

In terms of assembly, interacts with NDEL1. Interacts with CCDC88A (via C-terminus); the interaction is direct. Interacts with GSK3B. Interacts with tubulin alpha, ACTN2, ANKHD1, ATF4, ATF5, CEP63, EIF3S3, MAP1A, NDEL1, PAFAH1B1, RANBP9, SPTBN4, SYNE1 and TRAF3IP1. Interaction with microtubules may be mediated in part by TRAF3IP1. Interacts (via C-terminal) with PCNT. Interacts with CHCHD6. Interacts with CCDC141. Interacts with FBXW7, the substrate-recognition component of a SCF (SKP1-CUL1-F-box protein) E3 ubiquitin-protein ligase complex; the interaction targets DISC1 for proteasomal degradation. Interacts with ZNF365. Interacts with ATF4; inhibiting ATF4 transcription factor activity by disrupting ATF4 dimerization and DNA-binding. Interacts with PDE4B (isoform PDE4B5). Ubiquitinated. Ubiquitination with 'Lys-48'-linked polyubiquitin chains leads to its proteasomal degradation. As to expression, ubiquitous. Highly expressed in the dentate gyrus of the hippocampus. Also expressed in the temporal and parahippocampal cortices and cells of the white matter.

It is found in the cytoplasm. The protein localises to the cytoskeleton. Its subcellular location is the mitochondrion. The protein resides in the microtubule organizing center. It localises to the centrosome. It is found in the postsynaptic density. In terms of biological role, involved in the regulation of multiple aspects of embryonic and adult neurogenesis. Required for neural progenitor proliferation in the ventrical/subventrical zone during embryonic brain development and in the adult dentate gyrus of the hippocampus. Participates in the Wnt-mediated neural progenitor proliferation as a positive regulator by modulating GSK3B activity and CTNNB1 abundance. Plays a role as a modulator of the AKT-mTOR signaling pathway controlling the tempo of the process of newborn neurons integration during adult neurogenesis, including neuron positioning, dendritic development and synapse formation. Inhibits the activation of AKT-mTOR signaling upon interaction with CCDC88A. Regulates the migration of early-born granule cell precursors toward the dentate gyrus during the hippocampal development. Inhibits ATF4 transcription factor activity in neurons by disrupting ATF4 dimerization and DNA-binding. Plays a role, together with PCNT, in the microtubule network formation. This is Disrupted in schizophrenia 1 protein from Homo sapiens (Human).